The primary structure comprises 328 residues: Apoptosis facilitator Bcl-2-like protein 14 (328 aa).

Ser-44 is modified (phosphoserine). Positions 213–227 (IVELLKFSGDQLGRE) match the BH3 motif. Residues 309 to 316 (WVQQNGGW) carry the BH2 motif.

Belongs to the Bcl-2 family. Post-translationally, phosphorylated by MELK, leading to inhibit its pro-apoptotic function.

It is found in the cytoplasm. Functionally, plays a role in apoptosis. The protein is Apoptosis facilitator Bcl-2-like protein 14 (Bcl2l14) of Mus musculus (Mouse).